The following is a 65-amino-acid chain: Small ribosomal subunit protein eS31 (65 aa).

Zn(2+) contacts are provided by C36, C39, C55, and C58. The segment at 36 to 58 (CPKCGSVMAFHKEPVPRWHCGKC) adopts a C4-type zinc-finger fold.

This sequence belongs to the eukaryotic ribosomal protein eS31 family. Part of the 30S ribosomal subunit. The cofactor is Zn(2+).

This is Small ribosomal subunit protein eS31 from Pyrobaculum aerophilum (strain ATCC 51768 / DSM 7523 / JCM 9630 / CIP 104966 / NBRC 100827 / IM2).